The sequence spans 462 residues: 3-isopropylmalate dehydratase large subunit (462 aa).

[4Fe-4S] cluster contacts are provided by Cys-337, Cys-397, and Cys-400.

Belongs to the aconitase/IPM isomerase family. LeuC type 1 subfamily. As to quaternary structure, heterodimer of LeuC and LeuD. It depends on [4Fe-4S] cluster as a cofactor.

The catalysed reaction is (2R,3S)-3-isopropylmalate = (2S)-2-isopropylmalate. It functions in the pathway amino-acid biosynthesis; L-leucine biosynthesis; L-leucine from 3-methyl-2-oxobutanoate: step 2/4. Functionally, catalyzes the isomerization between 2-isopropylmalate and 3-isopropylmalate, via the formation of 2-isopropylmaleate. This is 3-isopropylmalate dehydratase large subunit from Listeria monocytogenes serotype 4a (strain HCC23).